The sequence spans 193 residues: Imidazoleglycerol-phosphate dehydratase (193 aa).

This sequence belongs to the imidazoleglycerol-phosphate dehydratase family.

It is found in the cytoplasm. The enzyme catalyses D-erythro-1-(imidazol-4-yl)glycerol 3-phosphate = 3-(imidazol-4-yl)-2-oxopropyl phosphate + H2O. Its pathway is amino-acid biosynthesis; L-histidine biosynthesis; L-histidine from 5-phospho-alpha-D-ribose 1-diphosphate: step 6/9. This Methanospirillum hungatei JF-1 (strain ATCC 27890 / DSM 864 / NBRC 100397 / JF-1) protein is Imidazoleglycerol-phosphate dehydratase.